Consider the following 151-residue polypeptide: Deoxyuridine 5'-triphosphate nucleotidohydrolase (151 aa).

Substrate is bound by residues 70–72, Asn-83, 87–89, and Met-97; these read RSG and LID.

This sequence belongs to the dUTPase family. Mg(2+) serves as cofactor.

It catalyses the reaction dUTP + H2O = dUMP + diphosphate + H(+). Its pathway is pyrimidine metabolism; dUMP biosynthesis; dUMP from dCTP (dUTP route): step 2/2. Its function is as follows. This enzyme is involved in nucleotide metabolism: it produces dUMP, the immediate precursor of thymidine nucleotides and it decreases the intracellular concentration of dUTP so that uracil cannot be incorporated into DNA. This is Deoxyuridine 5'-triphosphate nucleotidohydrolase from Haemophilus influenzae (strain 86-028NP).